A 538-amino-acid polypeptide reads, in one-letter code: Sucrose transport protein SUT1 (538 aa).

Topologically, residues 1 to 52 (MARGSGAGGGGGGGGGGLELSVGVGGGGGARGGGGGEAAAAVETAAPISLGR) are cytoplasmic. The helical transmembrane segment at 53-73 (LILSGMVAGGVQYGWALQLSL) threads the bilayer. Topologically, residues 74 to 81 (LTPYVQTL) are extracellular. Residues 82–102 (GLSHALTSFMWLCGPIAGMVV) traverse the membrane as a helical segment. The Cytoplasmic segment spans residues 103–123 (QPCVGLYSDRCTSKWGRRRPY). Residues 124-144 (ILTGCVLICLAVVVIGFSADI) traverse the membrane as a helical segment. At 145–162 (GYAMGDTKEDCSVYHGSR) the chain is on the extracellular side. Residues 163 to 183 (WHAAIVYVLGFWLLDFSNNTV) form a helical membrane-spanning segment. At 184–198 (QGPARALMADLSGRH) the chain is on the cytoplasmic side. Residues 199–219 (GPGTANSIFCSWMAMGNILGY) traverse the membrane as a helical segment. Topologically, residues 220–247 (SSGSTNNWHKWFPFLKTRACCEACANLK) are extracellular. The helical transmembrane segment at 248–268 (GAFLVAVIFLSLCLVITLIFA) threads the bilayer. The Cytoplasmic portion of the chain corresponds to 269-306 (KEVPFKGNAALPTKSNEPAEPEGTGPLAVLKGFRNLPT). Residues 307–327 (GMPSVLIVTGLTWLSWFPFIL) form a helical membrane-spanning segment. Residues 328 to 357 (YDTDWMGREIYHGDPKGTDPQIEAFNQGVR) are Extracellular-facing. Residues 358–378 (AGAFGLLLNSIVLGFSSFLIE) form a helical membrane-spanning segment. Residues 379–388 (PMCRKVGPRV) are Cytoplasmic-facing. The helical transmembrane segment at 389–409 (VWVTSNFLVCIAMAATALISF) threads the bilayer. Over 410–433 (WSLKDFHGTVQKAITADKSIKAVC) the chain is Extracellular. A helical membrane pass occupies residues 434–454 (LVLFAFLGVPLAVLYSVPFAV). Residues 455–470 (TAQLAATRGGGQGLCT) lie on the Cytoplasmic side of the membrane. A helical membrane pass occupies residues 471–491 (GVLNISIVIPQVVIALGAGPW). Over 492 to 499 (DELFGKGN) the chain is Extracellular. Residues 500-520 (IPAFGLASGFALIGGVAGIFL) traverse the membrane as a helical segment. At 521-538 (LPKISKRQFRSVSMGGGH) the chain is on the cytoplasmic side.

Belongs to the glycoside-pentoside-hexuronide (GPH) cation symporter transporter (TC 2.A.2.4) family. As to quaternary structure, homodimer.

The protein localises to the cell membrane. It functions in the pathway glycan biosynthesis; sucrose metabolism. In terms of biological role, responsible for the transport of sucrose into the cell, with the concomitant uptake of protons (symport system). May also transport other glucosides. May be required for apoplastic phloem sucrose loading in source tissues (e.g. leaves) in order to transport it to sink tissues (e.g. roots, flowers). This chain is Sucrose transport protein SUT1 (SUT1), found in Oryza sativa subsp. indica (Rice).